Here is a 230-residue protein sequence, read N- to C-terminus: ATP-dependent dethiobiotin synthetase BioD (230 aa).

ATP is bound at residue 12 to 17 (DVGKTV). Residue Thr-16 participates in Mg(2+) binding. Lys-37 is a catalytic residue. Thr-41 contacts substrate. Residues Asp-49, 108-111 (EGAG), 168-169 (GS), and 198-200 (PEG) contribute to the ATP site. Mg(2+) contacts are provided by Asp-49 and Glu-108.

It belongs to the dethiobiotin synthetase family. Homodimer. It depends on Mg(2+) as a cofactor.

The protein resides in the cytoplasm. The enzyme catalyses (7R,8S)-7,8-diammoniononanoate + CO2 + ATP = (4R,5S)-dethiobiotin + ADP + phosphate + 3 H(+). It functions in the pathway cofactor biosynthesis; biotin biosynthesis; biotin from 7,8-diaminononanoate: step 1/2. In terms of biological role, catalyzes a mechanistically unusual reaction, the ATP-dependent insertion of CO2 between the N7 and N8 nitrogen atoms of 7,8-diaminopelargonic acid (DAPA, also called 7,8-diammoniononanoate) to form a ureido ring. The chain is ATP-dependent dethiobiotin synthetase BioD from Corynebacterium kroppenstedtii (strain DSM 44385 / JCM 11950 / CIP 105744 / CCUG 35717).